We begin with the raw amino-acid sequence, 415 residues long: Phosphoglycerate kinase (415 aa).

Substrate contacts are provided by residues 24-26 (DLN), arginine 39, 62-65 (HLGR), arginine 121, and arginine 161. ATP is bound by residues lysine 211, glycine 307, glutamate 338, and 367–370 (GGDS).

The protein belongs to the phosphoglycerate kinase family. Monomer.

The protein resides in the cytoplasm. The enzyme catalyses (2R)-3-phosphoglycerate + ATP = (2R)-3-phospho-glyceroyl phosphate + ADP. It participates in carbohydrate degradation; glycolysis; pyruvate from D-glyceraldehyde 3-phosphate: step 2/5. The sequence is that of Phosphoglycerate kinase from Micrococcus luteus (strain ATCC 4698 / DSM 20030 / JCM 1464 / CCM 169 / CCUG 5858 / IAM 1056 / NBRC 3333 / NCIMB 9278 / NCTC 2665 / VKM Ac-2230) (Micrococcus lysodeikticus).